The sequence spans 556 residues: PPE family protein PPE2 (556 aa).

Residues 8 to 164 (ASPPEVHSAL…ASYQAVSTAA (157 aa)) form a PPE region. The SH3-like stretch occupies residues 201-256 (QKIGYTDFYNNVIQPFINWLTNLPFLQAMFSGFDPWLPSLGNPLTFLSPANIAFAL). Positions 319–340 (LEQTLALLPAALPLLAAPLAPL) are leucine zipper motif. Disordered stretches follow at residues 385–418 (TPTP…PPVT) and 443–556 (GTGV…TRVE). Residues 400-417 (PTPPLGPPPPPVTAPPPV) show a composition bias toward pro residues. Positions 456–471 (AEAPASAAAPEEQVQP) are enriched in low complexity. Residues 472–481 (QRRRRPKIKQ) are compositionally biased toward basic residues. The short motif at 473–481 (RRRRPKIKQ) is the Nuclear localization signal element.

This sequence belongs to the mycobacterial PPE family.

It is found in the secreted. Its subcellular location is the host cytoplasm. It localises to the host nucleus. Its function is as follows. Inhibits nitric oxide (NO) production in activated macrophages. Acts by inhibiting expression of the host inducible nitric oxide synthase (iNOS). PPE2 is translocated into the host macrophage nucleus, where it interacts with a GATA-binding site overlapping with the TATA box of NOS2 (iNOS) promoter, and strongly inhibits NOS2 gene transcription. Reduction in NO production in turn facilitates intracellular survival of the bacilli inside the macrophage. In addition, disrupts the assembly of NADPH oxidase complex, which inhibits NADPH oxidase-mediated reactive oxygen species (ROS) generation in macrophages and favors M.tuberculosis survival. Acts by interacting with NCF2, the cytosolic subunit of NADPH oxidase, and preventing translocation of NCF2 and NCF1 to the membrane, which causes a reduction of the functional assembly of NADPH oxidase complex and a decrease in NADPH oxidase activity. This Mycobacterium tuberculosis (strain CDC 1551 / Oshkosh) protein is PPE family protein PPE2 (PPE2).